We begin with the raw amino-acid sequence, 235 residues long: Orotidine 5'-phosphate decarboxylase (235 aa).

Substrate contacts are provided by residues aspartate 17, lysine 39, 66–75, threonine 121, arginine 182, glutamine 191, glycine 211, and arginine 212; that span reads DLKLHDIGNT. Lysine 68 acts as the Proton donor in catalysis.

Belongs to the OMP decarboxylase family. Type 1 subfamily. As to quaternary structure, homodimer.

It catalyses the reaction orotidine 5'-phosphate + H(+) = UMP + CO2. Its pathway is pyrimidine metabolism; UMP biosynthesis via de novo pathway; UMP from orotate: step 2/2. Its function is as follows. Catalyzes the decarboxylation of orotidine 5'-monophosphate (OMP) to uridine 5'-monophosphate (UMP). This is Orotidine 5'-phosphate decarboxylase from Rhodopseudomonas palustris (strain BisB5).